We begin with the raw amino-acid sequence, 144 residues long: Glutamyl-tRNA(Gln) amidotransferase subunit C, mitochondrial (144 aa).

The N-terminal 17 residues, 1–17 (MFRRSVSFVRSHVLRSF), are a transit peptide targeting the mitochondrion.

Belongs to the GatC family. As to quaternary structure, subunit of the heterotrimeric GatCAB amidotransferase (AdT) complex, composed of A, B and C subunits.

Its subcellular location is the mitochondrion. The enzyme catalyses L-glutamyl-tRNA(Gln) + L-glutamine + ATP + H2O = L-glutaminyl-tRNA(Gln) + L-glutamate + ADP + phosphate + H(+). Allows the formation of correctly charged Gln-tRNA(Gln) through the transamidation of misacylated Glu-tRNA(Gln) in the mitochondria. The reaction takes place in the presence of glutamine and ATP through an activated gamma-phospho-Glu-tRNA(Gln). This is Glutamyl-tRNA(Gln) amidotransferase subunit C, mitochondrial from Ixodes scapularis (Black-legged tick).